Reading from the N-terminus, the 407-residue chain is 12S rRNA N(4)-cytidine methyltransferase METTL15 (407 aa).

S-adenosyl-L-methionine is bound by residues 100 to 102 (GGH), aspartate 119, phenylalanine 146, aspartate 169, and glutamine 176. Serine 358 is modified (phosphoserine).

The protein belongs to the methyltransferase superfamily. RsmH family.

It localises to the mitochondrion matrix. It catalyses the reaction cytidine(839) in 12S rRNA + S-adenosyl-L-methionine = N(4)-methylcytidine(839) in 12S rRNA + S-adenosyl-L-homocysteine + H(+). Its function is as follows. N4-methylcytidine (m4C) methyltransferase responsible for the methylation of position C839 in mitochondrial 12S rRNA. Involved in the stabilization of 12S rRNA folding, therefore facilitating the assembly of the mitochondrial small ribosomal subunits. The protein is 12S rRNA N(4)-cytidine methyltransferase METTL15 of Homo sapiens (Human).